We begin with the raw amino-acid sequence, 295 residues long: ATP synthase gamma chain (295 aa).

It belongs to the ATPase gamma chain family. As to quaternary structure, F-type ATPases have 2 components, CF(1) - the catalytic core - and CF(0) - the membrane proton channel. CF(1) has five subunits: alpha(3), beta(3), gamma(1), delta(1), epsilon(1). CF(0) has three main subunits: a, b and c.

The protein resides in the cell membrane. Functionally, produces ATP from ADP in the presence of a proton gradient across the membrane. The gamma chain is believed to be important in regulating ATPase activity and the flow of protons through the CF(0) complex. This chain is ATP synthase gamma chain, found in Herpetosiphon aurantiacus (strain ATCC 23779 / DSM 785 / 114-95).